The sequence spans 584 residues: Alkaline nuclease (584 aa).

The disordered stretch occupies residues 409 to 430 (GGGADHHLRGSPGDSPPPIPFE).

It belongs to the herpesviridae alkaline nuclease family. Interacts with major DNA-binding protein; this interaction increases the nuclease processivity of the alkaline exonuclease.

It localises to the host nucleus. It is found in the host cytoplasm. In terms of biological role, plays a role in processing non linear or branched viral DNA intermediates in order to promote the production of mature packaged unit-length linear progeny viral DNA molecules. Exhibits endonuclease and exonuclease activities and accepts both double-stranded and single-stranded DNA as substrate. Exonuclease digestion of DNA is in the 5'-&gt; 3' direction and the products are 5'-monophosphate nucleosides. Additionally, forms a recombinase with the major DNA-binding protein, which displays strand exchange activity. The polypeptide is Alkaline nuclease (UL98) (Human cytomegalovirus (strain AD169) (HHV-5)).